The following is a 274-amino-acid chain: Protein LIKE COV 3 (274 aa).

Residues 1–60 lie on the Cytoplasmic side of the membrane; the sequence is METRERDLERLIPMHKSGASPRDVVLSVPPSPLASPIHVAGKEAIYKVIRSWASKKFMTG. The chain crosses the membrane as a helical span at residues 61–81; the sequence is CVILLPIAVTFYFTWWFIHFV. Residues 82 to 93 are Extracellular-facing; the sequence is DGFFSPIYTHLG. Residues 94 to 114 form a helical membrane-spanning segment; it reads INMFGLGFVTSITFIFMVGVF. Topologically, residues 115 to 274 are cytoplasmic; that stretch reads MSSWLGASVL…VCLSLVLAWT (160 aa).

This sequence belongs to the plant COV1 protein family.

It is found in the membrane. The chain is Protein LIKE COV 3 from Arabidopsis thaliana (Mouse-ear cress).